A 454-amino-acid polypeptide reads, in one-letter code: Bifunctional protein GlmU (454 aa).

Residues 1 to 226 are pyrophosphorylase; that stretch reads MSLDIVILAA…AMEVQGANDR (226 aa). Residues 8 to 11, Lys-22, Gln-73, 78 to 79, 99 to 101, Gly-136, Glu-151, Asn-166, and Asn-224 each bind UDP-N-acetyl-alpha-D-glucosamine; these read LAAG, GT, and YGD. Asp-101 contacts Mg(2+). Mg(2+) is bound at residue Asn-224. The segment at 227–247 is linker; that stretch reads LQLAQLERHYQSRVARRLMAQ. Residues 248-454 form an N-acetyltransferase region; sequence GVTLRDPARF…GWQRPTKQKK (207 aa). Arg-330 and Lys-348 together coordinate UDP-N-acetyl-alpha-D-glucosamine. The active-site Proton acceptor is the His-360. Positions 363 and 374 each coordinate UDP-N-acetyl-alpha-D-glucosamine. Acetyl-CoA is bound by residues Ala-377, 383–384, Ser-402, Ala-420, and Arg-437; that span reads NY.

The protein in the N-terminal section; belongs to the N-acetylglucosamine-1-phosphate uridyltransferase family. This sequence in the C-terminal section; belongs to the transferase hexapeptide repeat family. As to quaternary structure, homotrimer. The cofactor is Mg(2+).

The protein resides in the cytoplasm. It catalyses the reaction alpha-D-glucosamine 1-phosphate + acetyl-CoA = N-acetyl-alpha-D-glucosamine 1-phosphate + CoA + H(+). It carries out the reaction N-acetyl-alpha-D-glucosamine 1-phosphate + UTP + H(+) = UDP-N-acetyl-alpha-D-glucosamine + diphosphate. The protein operates within nucleotide-sugar biosynthesis; UDP-N-acetyl-alpha-D-glucosamine biosynthesis; N-acetyl-alpha-D-glucosamine 1-phosphate from alpha-D-glucosamine 6-phosphate (route II): step 2/2. It participates in nucleotide-sugar biosynthesis; UDP-N-acetyl-alpha-D-glucosamine biosynthesis; UDP-N-acetyl-alpha-D-glucosamine from N-acetyl-alpha-D-glucosamine 1-phosphate: step 1/1. Its pathway is bacterial outer membrane biogenesis; LPS lipid A biosynthesis. Catalyzes the last two sequential reactions in the de novo biosynthetic pathway for UDP-N-acetylglucosamine (UDP-GlcNAc). The C-terminal domain catalyzes the transfer of acetyl group from acetyl coenzyme A to glucosamine-1-phosphate (GlcN-1-P) to produce N-acetylglucosamine-1-phosphate (GlcNAc-1-P), which is converted into UDP-GlcNAc by the transfer of uridine 5-monophosphate (from uridine 5-triphosphate), a reaction catalyzed by the N-terminal domain. The sequence is that of Bifunctional protein GlmU from Azotobacter vinelandii (strain DJ / ATCC BAA-1303).